The primary structure comprises 501 residues: Cytochrome P450 3A31 (501 aa).

Cys440 is a heme binding site.

This sequence belongs to the cytochrome P450 family. The cofactor is heme. As to expression, expressed constitutively in liver.

It is found in the endoplasmic reticulum membrane. It localises to the microsome membrane. It catalyses the reaction an organic molecule + reduced [NADPH--hemoprotein reductase] + O2 = an alcohol + oxidized [NADPH--hemoprotein reductase] + H2O + H(+). In terms of biological role, cytochromes P450 are a group of heme-thiolate monooxygenases. In liver microsomes, this enzyme is involved in an NADPH-dependent electron transport pathway. It oxidizes a variety of structurally unrelated compounds, including steroids, fatty acids, and xenobiotics. The chain is Cytochrome P450 3A31 (CYP3A31) from Mesocricetus auratus (Golden hamster).